A 356-amino-acid chain; its full sequence is sn-glycerol-3-phosphate import ATP-binding protein UgpC (356 aa).

In terms of domain architecture, ABC transporter spans 4-235 (LKLQAVTKSW…PASLFVASFI (232 aa)). 37 to 44 (GPSGCGKS) provides a ligand contact to ATP.

It belongs to the ABC transporter superfamily. sn-glycerol-3-phosphate importer (TC 3.A.1.1.3) family. As to quaternary structure, the complex is composed of two ATP-binding proteins (UgpC), two transmembrane proteins (UgpA and UgpE) and a solute-binding protein (UgpB).

The protein localises to the cell inner membrane. It carries out the reaction sn-glycerol 3-phosphate(out) + ATP + H2O = sn-glycerol 3-phosphate(in) + ADP + phosphate + H(+). Part of the ABC transporter complex UgpBAEC involved in sn-glycerol-3-phosphate (G3P) import. Responsible for energy coupling to the transport system. The sequence is that of sn-glycerol-3-phosphate import ATP-binding protein UgpC from Shigella boydii serotype 4 (strain Sb227).